Here is a 316-residue protein sequence, read N- to C-terminus: Probable 5-dehydro-4-deoxyglucarate dehydratase (316 aa).

It belongs to the DapA family.

The catalysed reaction is 5-dehydro-4-deoxy-D-glucarate + H(+) = 2,5-dioxopentanoate + CO2 + H2O. Its pathway is carbohydrate acid metabolism; D-glucarate degradation; 2,5-dioxopentanoate from D-glucarate: step 2/2. This is Probable 5-dehydro-4-deoxyglucarate dehydratase from Corynebacterium glutamicum (strain R).